We begin with the raw amino-acid sequence, 249 residues long: Methylthioribulose-1-phosphate dehydratase (249 aa).

Zn(2+)-binding residues include H103 and H105.

This sequence belongs to the aldolase class II family. MtnB subfamily. Requires Zn(2+) as cofactor.

It carries out the reaction 5-(methylsulfanyl)-D-ribulose 1-phosphate = 5-methylsulfanyl-2,3-dioxopentyl phosphate + H2O. Its pathway is amino-acid biosynthesis; L-methionine biosynthesis via salvage pathway; L-methionine from S-methyl-5-thio-alpha-D-ribose 1-phosphate: step 2/6. Catalyzes the dehydration of methylthioribulose-1-phosphate (MTRu-1-P) into 2,3-diketo-5-methylthiopentyl-1-phosphate (DK-MTP-1-P). This chain is Methylthioribulose-1-phosphate dehydratase, found in Leptospira interrogans serogroup Icterohaemorrhagiae serovar Lai (strain 56601).